We begin with the raw amino-acid sequence, 571 residues long: Carboxylesterase 3 (571 aa).

The signal sequence occupies residues 1-26 (MERAVRVESGVLVGVVCLLLACPATA). A disulfide bridge links Cys-97 with Cys-124. The N-linked (GlcNAc...) asparagine glycan is linked to Asn-105. Ser-229 functions as the Acyl-ester intermediate in the catalytic mechanism. Cys-281 and Cys-292 are oxidised to a cystine. Catalysis depends on charge relay system residues Glu-347 and His-460. Residues 568–571 (QEDL) carry the Prevents secretion from ER motif.

It belongs to the type-B carboxylesterase/lipase family. N-glycosylated. In terms of tissue distribution, expressed in liver, colon and small intestine.

The protein localises to the endoplasmic reticulum lumen. The catalysed reaction is a carboxylic ester + H2O = an alcohol + a carboxylate + H(+). In terms of biological role, involved in the detoxification of xenobiotics and in the activation of ester and amide prodrugs. Shows low catalytic efficiency for hydrolysis of CPT-11 (7-ethyl-10-[4-(1-piperidino)-1-piperidino]-carbonyloxycamptothecin), a prodrug for camptothecin used in cancer therapeutics. The polypeptide is Carboxylesterase 3 (CES3) (Homo sapiens (Human)).